The primary structure comprises 578 residues: Moesin/ezrin/radixin homolog 1 (578 aa).

An FERM domain is found at 1–296 (MSPKALNVRV…GNHELYMRRR (296 aa)). The disordered stretch occupies residues 463 to 555 (ASTTPQHHHV…HRENVRQGRD (93 aa)). The span at 475 to 484 (DENENEEELT) shows a compositional bias: acidic residues. Basic and acidic residues predominate over residues 492 to 555 (VSRDLDTDEH…HRENVRQGRD (64 aa)). Thr559 is modified (phosphothreonine).

As to quaternary structure, interacts with wgn. Interacts with Mer and arm at the adherens junction. Interacts with cytoskeletal actin at apical buds of microvilli in the precellularised embryo. Interacts with PCID2 (possibly via FERM domain). Phosphorylated on Thr-559. In the oocyte this phosphorylation is induced by phosphatidylinositol 4,5-bisphosphate (PtdIns[4,5]P(2)) generated by sktl.

The protein localises to the cell junction. Its subcellular location is the adherens junction. It localises to the cell projection. It is found in the microvillus. The protein resides in the rhabdomere. The protein localises to the cell membrane. Its subcellular location is the cytoplasm. It localises to the cytoskeleton. It is found in the cell cortex. The protein resides in the cilium. The protein localises to the flagellum. Its subcellular location is the nucleus. It localises to the nucleoplasm. It is found in the chromosome. Functionally, involved in connections of major cytoskeletal structures to the plasma membrane. Together with wgn, involved in control of axon targeting of R8 and R2-R5 photoreceptors, independent of egr. In the nucleus, recruited to sites of active transcription by RNA polymerase II where it has a role in nuclear mRNA export together with the mRNA export factor PCID2 and other messenger ribonucleoprotein (mRNP) particles. The protein is Moesin/ezrin/radixin homolog 1 (Moe) of Drosophila melanogaster (Fruit fly).